The primary structure comprises 329 residues: DNA-directed RNA polymerase subunit alpha (329 aa).

The segment at 1–235 (MQGSVTEFLK…EQLEAFVDLR (235 aa)) is alpha N-terminal domain (alpha-NTD). Residues 249 to 329 (FDPILLRPVD…NWPPASIADE (81 aa)) form an alpha C-terminal domain (alpha-CTD) region.

This sequence belongs to the RNA polymerase alpha chain family. Homodimer. The RNAP catalytic core consists of 2 alpha, 1 beta, 1 beta' and 1 omega subunit. When a sigma factor is associated with the core the holoenzyme is formed, which can initiate transcription.

The enzyme catalyses RNA(n) + a ribonucleoside 5'-triphosphate = RNA(n+1) + diphosphate. In terms of biological role, DNA-dependent RNA polymerase catalyzes the transcription of DNA into RNA using the four ribonucleoside triphosphates as substrates. The chain is DNA-directed RNA polymerase subunit alpha from Shigella flexneri serotype 5b (strain 8401).